A 351-amino-acid polypeptide reads, in one-letter code: Fe(3+) ions import ATP-binding protein FbpC (351 aa).

In terms of domain architecture, ABC transporter spans 7 to 241; that stretch reads LTVKNLNKFF…PNHLETAKFM (235 aa). 39–46 serves as a coordination point for ATP; the sequence is GASGCGKT.

Belongs to the ABC transporter superfamily. Fe(3+) ion importer (TC 3.A.1.10) family. The complex is composed of two ATP-binding proteins (FbpC), two transmembrane proteins (FbpB) and a solute-binding protein (FbpA).

It is found in the cell inner membrane. The catalysed reaction is Fe(3+)(out) + ATP + H2O = Fe(3+)(in) + ADP + phosphate + H(+). Part of the ABC transporter complex FbpABC involved in Fe(3+) ions import. Responsible for energy coupling to the transport system. This chain is Fe(3+) ions import ATP-binding protein FbpC, found in Haemophilus influenzae (strain 86-028NP).